A 437-amino-acid chain; its full sequence is MGTPGSGRKRTPVKDRFSAEDEALSNIAREAEARLAAKRAARAEARDIRMRELERQQRESSSKDITGTHWSRASTPKRRDMMYDSIKDRSSRVSSLLDEKSDKQYAENYTRPSSRNSASATTPLSGNSSRRGSGDTSSLIDPDTSLSELRESLSEVEEKYKKAMVSNAQLDNEKNNLIYQVDTLKDVIEEQEEQMAEFYRENEEKSKELERQKHMCSVLQHKMDELKEGLRQRDELIEKHGLVIIPESTPNGDVNHEPVVGAITAVSQEAAQVLESAGEGPLDVRLRKLAEEKDELLSQIRKLKLQLEEERQKCSRNDGMSGDLAGLQNGSDLQFIEMQRDANRQISEYKFKLSKAEQDIATLEQSISRLEGQVLRYKTAAENAEKIEDELKAEKRKLQRELRTAQDKIEEMEMTNSHLAKRLEKMKANRTALLAQQ.

A Phosphoserine modification is found at Ser-18. A coiled-coil region spans residues 22–49; the sequence is EALSNIAREAEARLAAKRAARAEARDIR. The segment covering 33 to 62 has biased composition (basic and acidic residues); that stretch reads ARLAAKRAARAEARDIRMRELERQQRESSS. The interval 33 to 152 is disordered; the sequence is ARLAAKRAAR…DTSLSELRES (120 aa). Residues 63 to 74 show a composition bias toward polar residues; the sequence is KDITGTHWSRAS. Over residues 77-105 the composition is skewed to basic and acidic residues; the sequence is KRRDMMYDSIKDRSSRVSSLLDEKSDKQY. Over residues 110–139 the composition is skewed to polar residues; that stretch reads TRPSSRNSASATTPLSGNSSRRGSGDTSSL. 5 positions are modified to phosphoserine: Ser-114, Ser-117, Ser-125, Ser-129, and Ser-133. Thr-136 carries the phosphothreonine modification. Phosphoserine occurs at positions 137 and 138. Coiled coils occupy residues 143–239 and 282–430; these read DTSL…LIEK and LDVR…KANR.

The protein belongs to the LRRFIP family. Interacts with DVL3 and FLII. Weakly interacts with MYD88 in resting cells. Following LPS-stimulation, the interaction with MYD88 is rapidly enhanced; the complex gradually dissociates to basal levels after 6 hours of stimulation. Interaction with MYD88 is regulated by LPS-induced phosphorylation. In the presence of LPS, competes with FLII for MYD88-binding.

In terms of biological role, may function as activator of the canonical Wnt signaling pathway, in association with DVL3, upstream of CTNNB1/beta-catenin. Positively regulates Toll-like receptor (TLR) signaling in response to agonist probably by competing with the negative FLII regulator for MYD88-binding. This chain is Leucine-rich repeat flightless-interacting protein 2 (Lrrfip2), found in Rattus norvegicus (Rat).